The following is a 482-amino-acid chain: C3a anaphylatoxin chemotactic receptor (482 aa).

Residues Met-1–Val-23 lie on the Extracellular side of the membrane. Asn-9 carries N-linked (GlcNAc...) asparagine glycosylation. The chain crosses the membrane as a helical span at residues Ile-24–Trp-46. Residues Val-47–Asn-57 are Cytoplasmic-facing. Residues Thr-58–Ala-80 form a helical membrane-spanning segment. At His-81–Glu-96 the chain is on the extracellular side. Residues Cys-95 and Cys-172 are joined by a disulfide bond. A helical membrane pass occupies residues Leu-97–Leu-118. Residues Asp-119–Ala-139 are Cytoplasmic-facing. A helical membrane pass occupies residues Cys-140 to Tyr-160. Over Arg-161–Arg-340 the chain is Extracellular. Tyr-174 and Tyr-184 each carry sulfotyrosine. A glycan (N-linked (GlcNAc...) asparagine) is linked at Asn-194. Tyr-318 bears the Sulfotyrosine mark. The helical transmembrane segment at Leu-341 to Val-360 threads the bilayer. The Cytoplasmic portion of the chain corresponds to Phe-361–Arg-377. A helical membrane pass occupies residues Val-378–Ser-400. The Extracellular portion of the chain corresponds to Leu-401 to Asp-417. Residues His-418 to Leu-438 traverse the membrane as a helical segment. Topologically, residues Gly-439–Val-482 are cytoplasmic. A Phosphoserine modification is found at Ser-459. Thr-463 carries the phosphothreonine modification.

The protein belongs to the G-protein coupled receptor 1 family. In terms of assembly, interacts with VGF-derived peptide TLQP-21. In terms of processing, among the sulfation sites Tyr-174 is essential for binding of C3a anaphylatoxin.

Its subcellular location is the cell membrane. Receptor for the chemotactic and inflammatory peptide anaphylatoxin C3a. This receptor stimulates chemotaxis, granule enzyme release and superoxide anion production. This is C3a anaphylatoxin chemotactic receptor (C3AR1) from Pongo abelii (Sumatran orangutan).